The chain runs to 250 residues: UPF0736 protein BLi01230/BL03322 (250 aa).

The protein belongs to the UPF0736 family.

The polypeptide is UPF0736 protein BLi01230/BL03322 (Bacillus licheniformis (strain ATCC 14580 / DSM 13 / JCM 2505 / CCUG 7422 / NBRC 12200 / NCIMB 9375 / NCTC 10341 / NRRL NRS-1264 / Gibson 46)).